The chain runs to 181 residues: Organelle RRM domain-containing protein 6, chloroplastic (181 aa).

Residues 1–44 (MAISLGRVVVPSCTISGDRLFIPNFSAICSVSCGRINVGTGVIS) constitute a chloroplast transit peptide. The region spanning 77–155 (TKLYVSGLSF…RVIFVEEAKT (79 aa)) is the RRM domain. Over residues 155-169 (TRSDMSRAKPRRDFP) the composition is skewed to basic and acidic residues. The interval 155-181 (TRSDMSRAKPRRDFPKPQSKPRTFRTW) is disordered.

Interacts with MORF8/RIP1, MORF2/RIP2, MORF9/RIP9 and VAR3/OZ1.

The protein resides in the plastid. It localises to the chloroplast. Involved in C-to-U editing of chloroplastic RNA. Required for the photosynthetic subunit psbF transcript editing in chloroplast. In Arabidopsis thaliana (Mouse-ear cress), this protein is Organelle RRM domain-containing protein 6, chloroplastic.